A 118-amino-acid chain; its full sequence is Ribonuclease P protein component 2 (118 aa).

Belongs to the eukaryotic/archaeal RNase P protein component 2 family. Consists of a catalytic RNA component and at least 4-5 protein subunits.

It localises to the cytoplasm. It carries out the reaction Endonucleolytic cleavage of RNA, removing 5'-extranucleotides from tRNA precursor.. Functionally, part of ribonuclease P, a protein complex that generates mature tRNA molecules by cleaving their 5'-ends. This is Ribonuclease P protein component 2 from Pyrococcus abyssi (strain GE5 / Orsay).